We begin with the raw amino-acid sequence, 172 residues long: uncharacterized protein (172 aa).

3 helical membrane passes run 16–36 (IMIV…AYLI), 68–88 (SFLI…AGEL), and 89–109 (VISH…YIII).

It localises to the cell membrane. This is an uncharacterized protein from Methanocaldococcus jannaschii (strain ATCC 43067 / DSM 2661 / JAL-1 / JCM 10045 / NBRC 100440) (Methanococcus jannaschii).